We begin with the raw amino-acid sequence, 135 residues long: Large ribosomal subunit protein uL16c (135 aa).

This sequence belongs to the universal ribosomal protein uL16 family. Part of the 50S ribosomal subunit.

It is found in the plastid. The protein localises to the chloroplast. The polypeptide is Large ribosomal subunit protein uL16c (Cucumis sativus (Cucumber)).